Reading from the N-terminus, the 677-residue chain is Methionine--tRNA ligase (677 aa).

The 'HIGH' region motif lies at 15–25 (PYANGSIHLGH). Zn(2+)-binding residues include Cys146, Cys149, Cys159, and Cys162. Positions 333-337 (KMSKS) match the 'KMSKS' region motif. An ATP-binding site is contributed by Lys336. In terms of domain architecture, tRNA-binding spans 575–677 (DFAKVDLRVA…AGAKPGHQVK (103 aa)).

This sequence belongs to the class-I aminoacyl-tRNA synthetase family. MetG type 1 subfamily. As to quaternary structure, homodimer. It depends on Zn(2+) as a cofactor.

The protein localises to the cytoplasm. The catalysed reaction is tRNA(Met) + L-methionine + ATP = L-methionyl-tRNA(Met) + AMP + diphosphate. In terms of biological role, is required not only for elongation of protein synthesis but also for the initiation of all mRNA translation through initiator tRNA(fMet) aminoacylation. This Escherichia coli O157:H7 protein is Methionine--tRNA ligase.